The chain runs to 444 residues: Sensor protein CiaH (444 aa).

A run of 2 helical transmembrane segments spans residues 21–41 (FGVF…VMHS) and 183–203 (LIVV…LYLA). The Histidine kinase domain occupies 223 to 438 (NASHELRTPL…IFEVKIAIQT (216 aa)). Phosphohistidine; by autocatalysis is present on H226.

The protein localises to the cell membrane. It carries out the reaction ATP + protein L-histidine = ADP + protein N-phospho-L-histidine.. Its function is as follows. Member of the two-component regulatory system CiaH/CiaR. Involved in early steps of competence regulation and in penicillin susceptibility. Probably phosphorylates CiaR. The polypeptide is Sensor protein CiaH (ciaH) (Streptococcus pneumoniae serotype 4 (strain ATCC BAA-334 / TIGR4)).